A 462-amino-acid chain; its full sequence is Notoamide biosynthesis cluster protein O' (462 aa).

A run of 3 helical transmembrane segments spans residues 16-36 (IFNV…WAAM), 55-75 (AVIF…IAKI), and 79-99 (WAFA…YCNV). An N-linked (GlcNAc...) asparagine glycan is attached at Asn-102. Helical transmembrane passes span 104–124 (SWYI…FWLT), 143–163 (AYWL…TLGV), 173–193 (ISVQ…FVAA), and 233–253 (ILLL…FSTY). N-linked (GlcNAc...) asparagine glycosylation is present at Asn-254. Transmembrane regions (helical) follow at residues 265–285 (LSSL…GFFL), 297–317 (MAAF…AMVV), 343–363 (VYIL…WLIG), and 404–424 (AVAV…FVIY). The disordered stretch occupies residues 443–462 (LQTSGEGSHDIMDANGKSDD). Residues 449–462 (GSHDIMDANGKSDD) show a composition bias toward basic and acidic residues.

The protein belongs to the unc-93 family.

It localises to the membrane. Its function is as follows. Part of the gene cluster that mediates the biosynthesis of notoamide, a fungal indole alkaloid that belongs to a family of natural products containing a characteristic bicyclo[2.2.2]diazaoctane core. The first step of notoamide biosynthesis involves coupling of L-proline and L-tryptophan by the bimodular NRPS notE', to produce cyclo-L-tryptophan-L-proline called brevianamide F. The reverse prenyltransferase notF' then acts as a deoxybrevianamide E synthase and converts brevianamide F to deoxybrevianamide E via reverse prenylation at C-2 of the indole ring leading to the bicyclo[2.2.2]diazaoctane core. Deoxybrevianamide E is further hydroxylated at C-6 of the indole ring, likely catalyzed by the cytochrome P450 monooxygenase notG', to yield 6-hydroxy-deoxybrevianamide E. 6-hydroxy-deoxybrevianamide E is a specific substrate of the prenyltransferase notC' for normal prenylation at C-7 to produce 6-hydroxy-7-prenyl-deoxybrevianamide, also called notoamide S. As the proposed pivotal branching point in notoamide biosynthesis, notoamide S can be diverted to notoamide E through an oxidative pyran ring closure putatively catalyzed by either notH' cytochrome P450 monooxygenase or the notD' FAD-linked oxidoreductase. This step would be followed by an indole 2,3-epoxidation-initiated pinacol-like rearrangement catalyzed by the notB' FAD-dependent monooxygenase leading to the formation of notoamide C and notoamide D. On the other hand notoamide S is converted to notoamide T by notH' (or notD'), a bifunctional oxidase that also functions as the intramolecular Diels-Alderase responsible for generation of (-)-notoamide T. To generate antipodal (+)-notoaminide T, notH (or notD) in Aspergillus strain MF297-2 is expected to catalyze a Diels-Alder reaction leading to the opposite stereochemistry. The remaining oxidoreductase notD' (or notH') likely catalyzes the oxidative pyran ring formation to yield (-)-stephacidin A. The FAD-dependent monooxygenase notI' is highly similar to notB' and is predicted to catalyze a similar conversion from (-)-stephacidin A to (+)-notoamide B via the 2,3-epoxidation of (-)-stephacidin A followed by a pinacol-type rearrangement. Finally, it remains unclear which enzyme could be responsible for the final hydroxylation steps leading to notoamide A and sclerotiamide. The function of notO' in the notoamide biosynthesis has not been determined yet. This is Notoamide biosynthesis cluster protein O' from Aspergillus versicolor.